The primary structure comprises 1337 residues: DNA mismatch repair protein Msh6 (1337 aa).

One can recognise a PWWP domain in the interval 68–130 (PGDLVWAKME…IKYLRPYKGS (63 aa)). Residues 170 to 310 (AVCSEPSDTE…SEAPKRAAPV (141 aa)) form a disordered region. Acidic residues predominate over residues 176-187 (SDTEEAEEEEME). Basic and acidic residues predominate over residues 226 to 248 (VLDSDSDRDGSDVEFKPDVKEAS). Residues 257-272 (DENEATDVETDEESIE) are compositionally biased toward acidic residues. Over residues 279–292 (PSKRKRGNVSKPSK) the composition is skewed to basic residues. Basic and acidic residues predominate over residues 294-305 (SSLENEHSEAPK). Residue 1111–1118 (GPNMGGKS) coordinates ATP.

Belongs to the DNA mismatch repair MutS family.

The protein localises to the nucleus. Component of the post-replicative DNA mismatch repair system (MMR). Involved in B cell growth by positively regulating B cell proliferation and controlling replication efficiency. Controls cell cycle to prevent re-replication and defects in DNA damage-induced G2 checkpoint. Doesn't seem to counteract or control the immunoglobulin gene conversion (Ig GC) and to contribute to guanine/uracil mismatch repair. The polypeptide is DNA mismatch repair protein Msh6 (Gallus gallus (Chicken)).